Consider the following 204-residue polypeptide: Putative AgrB-like protein (204 aa).

Transmembrane regions (helical) follow at residues 51–73, 87–107, 111–131, 151–168, and 173–190; these read VYGI…SYLW, LNCT…FQNI, NWIV…FAPA, AMIG…IPFA, and LIMV…PLTY.

Belongs to the AgrB family.

It localises to the cell membrane. Functionally, may be involved in the proteolytic processing of a quorum sensing system signal molecule precursor. This chain is Putative AgrB-like protein, found in Listeria innocua serovar 6a (strain ATCC BAA-680 / CLIP 11262).